Reading from the N-terminus, the 144-residue chain is Sec-independent protein translocase protein TatB (144 aa).

A helical membrane pass occupies residues 1–21 (MFEIGFWELVLVAIIGIVVVG). The tract at residues 97-144 (KMIDEPPYQEPPPAAHSVQTDAEAYRDTGIEPADKSSSPEHHHDDAAR) is disordered. Basic and acidic residues predominate over residues 119–144 (EAYRDTGIEPADKSSSPEHHHDDAAR).

The protein belongs to the TatB family. As to quaternary structure, the Tat system comprises two distinct complexes: a TatABC complex, containing multiple copies of TatA, TatB and TatC subunits, and a separate TatA complex, containing only TatA subunits. Substrates initially bind to the TatABC complex, which probably triggers association of the separate TatA complex to form the active translocon.

The protein resides in the cell inner membrane. Part of the twin-arginine translocation (Tat) system that transports large folded proteins containing a characteristic twin-arginine motif in their signal peptide across membranes. Together with TatC, TatB is part of a receptor directly interacting with Tat signal peptides. TatB may form an oligomeric binding site that transiently accommodates folded Tat precursor proteins before their translocation. The protein is Sec-independent protein translocase protein TatB of Dichelobacter nodosus (strain VCS1703A).